Consider the following 285-residue polypeptide: Nucleotide-binding protein in ptsN-ptsO intergenic region (285 aa).

An ATP-binding site is contributed by 8–15 (GRSGSGKS). 60 to 63 (DARN) contributes to the GTP binding site.

This sequence belongs to the RapZ-like family.

Its function is as follows. Displays ATPase and GTPase activities. This chain is Nucleotide-binding protein in ptsN-ptsO intergenic region, found in Stutzerimonas stutzeri (Pseudomonas stutzeri).